The chain runs to 302 residues: Aspartate carbamoyltransferase catalytic subunit (302 aa).

Residues Arg51 and Thr52 each coordinate carbamoyl phosphate. Lys80 serves as a coordination point for L-aspartate. Arg101, His129, and Gln132 together coordinate carbamoyl phosphate. The L-aspartate site is built by Arg162 and Arg223. Positions 261 and 262 each coordinate carbamoyl phosphate.

The protein belongs to the aspartate/ornithine carbamoyltransferase superfamily. ATCase family. Heterododecamer (2C3:3R2) of six catalytic PyrB chains organized as two trimers (C3), and six regulatory PyrI chains organized as three dimers (R2).

It carries out the reaction carbamoyl phosphate + L-aspartate = N-carbamoyl-L-aspartate + phosphate + H(+). It functions in the pathway pyrimidine metabolism; UMP biosynthesis via de novo pathway; (S)-dihydroorotate from bicarbonate: step 2/3. Catalyzes the condensation of carbamoyl phosphate and aspartate to form carbamoyl aspartate and inorganic phosphate, the committed step in the de novo pyrimidine nucleotide biosynthesis pathway. This Chromobacterium violaceum (strain ATCC 12472 / DSM 30191 / JCM 1249 / CCUG 213 / NBRC 12614 / NCIMB 9131 / NCTC 9757 / MK) protein is Aspartate carbamoyltransferase catalytic subunit.